A 174-amino-acid chain; its full sequence is Transcription antitermination protein NusB (174 aa).

Belongs to the NusB family.

Its function is as follows. Involved in transcription antitermination. Required for transcription of ribosomal RNA (rRNA) genes. Binds specifically to the boxA antiterminator sequence of the ribosomal RNA (rrn) operons. This chain is Transcription antitermination protein NusB, found in Rhodopseudomonas palustris (strain TIE-1).